The sequence spans 271 residues: uncharacterized protein (271 aa).

This is an uncharacterized protein from Azospirillum brasilense.